The primary structure comprises 376 residues: Glucose-1-phosphate adenylyltransferase (376 aa).

Alpha-D-glucose 1-phosphate is bound by residues tyrosine 101, glycine 166, glutamate 181–lysine 182, and serine 192.

This sequence belongs to the bacterial/plant glucose-1-phosphate adenylyltransferase family. As to quaternary structure, homotetramer.

The enzyme catalyses alpha-D-glucose 1-phosphate + ATP + H(+) = ADP-alpha-D-glucose + diphosphate. Its pathway is glycan biosynthesis; glycogen biosynthesis. Involved in the biosynthesis of ADP-glucose, a building block required for the elongation reactions to produce glycogen. Catalyzes the reaction between ATP and alpha-D-glucose 1-phosphate (G1P) to produce pyrophosphate and ADP-Glc. The polypeptide is Glucose-1-phosphate adenylyltransferase (Bacillus cereus (strain Q1)).